Here is a 208-residue protein sequence, read N- to C-terminus: MTEDTETSSTGAGADDRTAAISRETAETTINVTLAVDGDGEATVDTGIGFFDHMLETFAKHGLFDLTVRCDGDLDIDDHHTVEDVGIVLGKSFNNALGEKRGIVRYADRSVPLDEAVATVIADISGRPHFEFSGSFSQPQIGGFTSDMARHFAYSFTMHSEITLHASIEGINAHHEVEALFKSLARTLDEATQLDPRRGDTPSTKGEL.

A disordered region spans residues 1–22 (MTEDTETSSTGAGADDRTAAIS).

The protein belongs to the imidazoleglycerol-phosphate dehydratase family.

The protein localises to the cytoplasm. It carries out the reaction D-erythro-1-(imidazol-4-yl)glycerol 3-phosphate = 3-(imidazol-4-yl)-2-oxopropyl phosphate + H2O. It participates in amino-acid biosynthesis; L-histidine biosynthesis; L-histidine from 5-phospho-alpha-D-ribose 1-diphosphate: step 6/9. This Haloquadratum walsbyi (strain DSM 16790 / HBSQ001) protein is Imidazoleglycerol-phosphate dehydratase.